Consider the following 230-residue polypeptide: Flagellar L-ring protein (230 aa).

Positions 1–18 (MNRLNIAVSCLATALLFG) are cleaved as a signal peptide. A lipid anchor (N-palmitoyl cysteine) is attached at Cys-19. Cys-19 carries S-diacylglycerol cysteine lipidation.

Belongs to the FlgH family. The basal body constitutes a major portion of the flagellar organelle and consists of four rings (L,P,S, and M) mounted on a central rod.

The protein localises to the cell outer membrane. It is found in the bacterial flagellum basal body. Functionally, assembles around the rod to form the L-ring and probably protects the motor/basal body from shearing forces during rotation. The polypeptide is Flagellar L-ring protein (Legionella pneumophila (strain Paris)).